The primary structure comprises 55 residues: Large ribosomal subunit protein bL33 (55 aa).

The protein belongs to the bacterial ribosomal protein bL33 family.

This chain is Large ribosomal subunit protein bL33, found in Methylacidiphilum infernorum (isolate V4) (Methylokorus infernorum (strain V4)).